The chain runs to 3029 residues: MAKHLYLAFSLILVPFLVSKAKQTSNGEVPWLVGCYRYDFDSSIEVSYHLDHAEPFSCVRLCASNESFRYAAVKNGRSCLCLARVEEKNRLNSSFCDVSCSEEMVNFTCGGKNVASVYSTAVPVIVSLKIRIPSKVKANASVLAVSEVLFRRRKEVSYLNTIALGNETADGVSVTWFLERELYNMTGYLQNKTLKVHSRIWNTLDGNYTNTSSVFLFVIPGVNHVCVLARNLFSQQKKCVPVDVVVPVTGLQLEAIFFKGTMLSVSSSSLSVPLSKYVEIKYAISSGSKPQFLVSLGNRTFHKAYNISGAAALSSSCLAVFPVFKSCGKKTIVVKAGNDFSLKSLRHLLVVHPFTEVLEFEKTEGHCIFTRVNTSVTLKATVGKDAPFGCPMSFEWNFNDSSSIIITDGTSVSHVFSSIQTYLVTVTLNNKFQRKQAAQQVCVQDNIKGVTLLPNVSYLIVSTNHEENLFSVQLSPSADCCGEVSYQFYKNETAFPLTAGRNSPVFHDSKPGRYVVFVQASNGISYATSNKILVDVMEPISSLFIDHLFLNHSHLSPGGKQVHFVAHLATGTNITYSWKFIGGSWENSINTTSNKVNYTFSKNGRYEVVLTASNAISKETASVDIVISDIPECYTRGVAIVGGMREVIRSQEIHLEAKLNLTCNVVNELRYLWKVTRRSDDDYDDDNHLSFFTYQVLIPPCTLEYGMYSIQLEVTMIDAKGIYLSSKNKKEIMITKSPLVAVISGGTERTVSKRKGPITLSASSSHDPDHPDEHKNLRFKWTCRPHGSSISCFNESTLPEIDFSKDALTFNVDWLMADFSHEFEVEVSKQDDPRSSTAFQILYVREKDELFEHVLSLNCIQCEKGHINPSQSLVIRGSCLSCSLDNPQITYRWKLYEVDSFVEGNTWECPSDDHSDRVTPSTTPMTDSNSPSVLQITDSYLEFTIGPCLGNKFEKSAGNKSGLASGSGDGTGNEIKYSSVKAPLKGNETSAIKADDSGDVDDDEVNNDNDDDSSSYSRSTLPTPLSMTNANSVNKPIITTDTPSFNKPNKPINPSMLWSRRRELRHLGEQTTTGIENQNLVLLGKFLKGGQTYLATFDVRDLETKQKGLASIIFQTSVSLKCGVCQITPAVGFSLQTTFQLVCSNWRSRQLLQYHVRYTIEGDRKEFIYSGLRDVTLFVLPAGNPFSNRTVEVHVEVSDGYSPSRTFRPIKVQVKPQTVAKGSSEEEVLLNETDGNNLSLLQMAGDEQRVLQFIMALSISLNRLSQVKNVSSNFHLRVAIREKLLNRFQNLSVYDKYSALQTCLALQSLTSKPDEIGANNVKVASQVLYNVIKNVTSKHKRKKKSLIEARQLLSQELIDCATTVTSNLIEAASLAVQRQDTTEKMLVMVTEATEQLIMAKLSTQVYGEHSLKVSTRNIIAEATQKRSVSNFSSSLSEFQFFMPSHLEEQLNITERCFGTMITCFQENPYFSDMNHTKVGSLSINHCSGEEIQVKNLGSDITILIPMGHGGAEKHPLNFMLKWNHRNVHVINQTAKMENQSLQLHLRPRSVLPSAFNVKFVVRTGKETLLFRSSGEAVNLFVDQEQLRSGSLNASVELEDTAYYRLKSVKGVSFNYSLGMQWIGCFYWNKRGKHWASDGCRLEKSINHTLVCRCNHLTAFSGGFIQPPNSLHLEDLRDTDKLKNSPLTMVLVISILVMYFLLLGFCVKADRHDKKKLGVIFLDDSTTFDANSQSRFQLSVQTGHWFGAGTSADVYLILHDNDVVSHPVELKYVGKPLFQRSSCDVFLLSFPKNLIRNISKIHVWHDNKGDYPSWFLERITIKNVQTGERWVFECNRWLAVDEGNGKVECELFAKKSWSTGLKESFLQHSAKAFLDYHLWLSLLGRPSYSRFTRAQRLSCCLSLLLSFLCVNIAWYRPKIEVTEVLGVLDVSANSIMIGVLGSLMVLPVNFLWIFFFRYSRRSLSRRVKACYPKSEHHTEITELVSSSVIDQSLETVQILSNFGAMRRMLQTRGTQVSGGNVPMSNPNGSGVCYLSAHDDLISDLPLPKGSAGLVETCDFLAALAPTRKKHDVAFDQQSTYSVYAPTTEGRGFYRSKFSLPHGFVYVAWFGCLITGTVTSAITIWYGLSFGWDLSVHWFQSLVFSLLESLLLSQPIMVLAFIFYMSHKTKSGKEDEDNDEGFEDLSTSDVNNIHYGYLNPGFDGQTTKKTPIDKALADRRRQRHLKYLKPPPLSQLAETREKSLKNRVLRNYVVELFVFIMFFVVTCALVFSVADPDVYHLNQSIRTSFLRSHYFTRPENVVDAWKRMSAVLVENASAPSPLMMLLPGTQSLLFGRTKVKKYYSPNVKVCHEAPAIQNSNTSTPLCYAGCHASKGLWITIDLNLTRAAAARQLTQFADTQWNNSCTREVSLDFAIYTPFLRAISAVTLSVKSSFVGTAKCDMELISAPVVFSSNGYSYFIRFTKLLFVVFFLYLLQHEFFLALKMTFSYFTNFWRVYQLLTIAISSACIVSYIHWSLSLYALLREVETERQSRVFYLSRQISWSQGFLQASYSLLLFLLLIRCLHLLRPFRFVRHFGRILSTSISSLLACWVFGFILVVAFAHPGYLLFGSVHSSFKSFGDAFLLVTSFFRLEGVARYQDFALEEQTLLLSTYFALFLIGFCVIVRGSTAAVVLHGIRCLGKRRRGLLSTVFEEFIRIKLQLSKEKKPKKPRPNSVSDLEETDDEDDLEQEAFLEEGPFFPTDHVLDELDAQIEEMSWRVESLFDDDPCADSISCTNSLLSTWLEDCDQGDVEYLYEAGNDPSVYSAGSGYESDHSAMSNSRCYFSSSSSLDIPDERIRHERVIGAKVGSHGCRGDHSLLTVAPNKTTAKQSYFCSSGRDESGSSINFSGDGYESPACSVPQGNMCDLPGACENPNILRNIVLRDSDLREGVLRDRTVWWDGETKKDMSLGAHTLHREKEPIKPKVMYGMVRGCSQKGEKAFPELANIAPHMEATTAGESSEEATCSSSDYEIGKEEASVIPVGQRVVSAM.

The first 21 residues, 1–21 (MAKHLYLAFSLILVPFLVSKA), serve as a signal peptide directing secretion. The Extracellular portion of the chain corresponds to 22 to 1685 (KQTSNGEVPW…RDTDKLKNSP (1664 aa)). Positions 29–121 (VPWLVGCYRY…KNVASVYSTA (93 aa)) constitute a WSC domain. PKD domains follow at residues 364-450 (EGHC…IKGV) and 546-634 (DHLF…PECY). The REJ domain occupies 633–1476 (CYTRGVAIVG…NPYFSDMNHT (844 aa)). Disordered regions lie at residues 754 to 773 (RKGP…HPDE), 909 to 931 (CPSD…SNSP), and 989 to 1051 (TSAI…PNKP). Polar residues predominate over residues 918 to 931 (VTPSTTPMTDSNSP). Positions 997–1013 (SGDVDDDEVNNDNDDDS) are enriched in acidic residues. Residues 1020 to 1047 (TLPTPLSMTNANSVNKPIITTDTPSFNK) are compositionally biased toward polar residues. Positions 1525 to 1671 (RNVHVINQTA…GFIQPPNSLH (147 aa)) constitute a GAIN-B domain. 2 disulfides stabilise this stretch: Cys-1624/Cys-1651 and Cys-1639/Cys-1653. Residues 1624 to 1671 (CFYWNKRGKHWASDGCRLEKSINHTLVCRCNHLTAFSGGFIQPPNSLH) are GPS. Residues 1686-1706 (LTMVLVISILVMYFLLLGFCV) form a helical membrane-spanning segment. Over 1707–1895 (KADRHDKKKL…SYSRFTRAQR (189 aa)) the chain is Cytoplasmic. The PLAT domain maps to 1733–1851 (SRFQLSVQTG…GNGKVECELF (119 aa)). A helical membrane pass occupies residues 1896–1916 (LSCCLSLLLSFLCVNIAWYRP). Residues 1917–1933 (KIEVTEVLGVLDVSANS) lie on the Extracellular side of the membrane. Residues 1934–1954 (IMIGVLGSLMVLPVNFLWIFF) traverse the membrane as a helical segment. The Cytoplasmic segment spans residues 1955 to 2101 (FRYSRRSLSR…YRSKFSLPHG (147 aa)). Residues 2102-2122 (FVYVAWFGCLITGTVTSAITI) form a helical membrane-spanning segment. The Extracellular portion of the chain corresponds to 2123–2140 (WYGLSFGWDLSVHWFQSL). The helical transmembrane segment at 2141-2161 (VFSLLESLLLSQPIMVLAFIF) threads the bilayer. Residues 2162 to 2250 (YMSHKTKSGK…SLKNRVLRNY (89 aa)) are Cytoplasmic-facing. Residues 2251 to 2271 (VVELFVFIMFFVVTCALVFSV) traverse the membrane as a helical segment. Residues 2272–2462 (ADPDVYHLNQ…GYSYFIRFTK (191 aa)) lie on the Extracellular side of the membrane. A helical transmembrane segment spans residues 2463-2483 (LLFVVFFLYLLQHEFFLALKM). Residues 2484 to 2496 (TFSYFTNFWRVYQ) are Cytoplasmic-facing. A helical membrane pass occupies residues 2497–2517 (LLTIAISSACIVSYIHWSLSL). Residues 2518-2538 (YALLREVETERQSRVFYLSRQ) lie on the Extracellular side of the membrane. A helical membrane pass occupies residues 2539-2559 (ISWSQGFLQASYSLLLFLLLI). The Cytoplasmic segment spans residues 2560–2586 (RCLHLLRPFRFVRHFGRILSTSISSLL). The helical transmembrane segment at 2587-2607 (ACWVFGFILVVAFAHPGYLLF) threads the bilayer. Over 2608–2651 (GSVHSSFKSFGDAFLLVTSFFRLEGVARYQDFALEEQTLLLSTY) the chain is Extracellular. A helical membrane pass occupies residues 2652 to 2672 (FALFLIGFCVIVRGSTAAVVL). The Cytoplasmic segment spans residues 2673–3029 (HGIRCLGKRR…PVGQRVVSAM (357 aa)). The interval 2704–2726 (KKPKKPRPNSVSDLEETDDEDDL) is disordered. Residues 2716 to 2726 (DLEETDDEDDL) show a composition bias toward acidic residues.

Belongs to the polycystin family. Heterodimer of 2 chains generated by proteolytic processing; the large extracellular N-terminal fragment and the membrane-bound C-terminal fragment predominantly remain associated and non-covalently linked. Autoproteolytically processed at the GPS region of the GAIN-B domain; this cleavage modulates receptor activity. As to expression, component of the acid-insoluble and acid-soluble organic matrix of the aragonitic skeleton (at protein level).

It is found in the membrane. In Acropora millepora (Staghorn coral), this protein is Polycystin-1-related protein.